Reading from the N-terminus, the 1171-residue chain is APC-related protein 1 (1171 aa).

The interval 1-54 (MSSSSSDENETTIHSSSNPGSSGIYSQLKAGSSKRPSVRHDVSDAEDDEEPYEG) is disordered. A required for interaction with bar-1 and hmp-2 region spans residues 1-481 (MSSSSSDENE…LSLRATRASP (481 aa)). Low complexity predominate over residues 15–26 (SSSNPGSSGIYS). An ARM repeat occupies 312-356 (NCLKVLANILSPDARFTTLVDSASGILKYVSQYLATNSSHLELRS). Disordered regions lie at residues 587–617 (PVDD…NPGS), 662–699 (HPED…GTTV), 720–741 (RKTS…LEVE), 767–822 (EEMP…EMTT), 837–936 (PRSR…TMRI), and 995–1030 (SSGS…SSLP). Residues 591–1171 (DLDIPTSTVM…NPKQMLVTIV (581 aa)) are required for interaction with pry-1. Composition is skewed to polar residues over residues 595–617 (PTST…NPGS) and 666–697 (NQMT…SDGT). The segment covering 788–799 (FSPSQKTTSSPA) has biased composition (polar residues). Residues 857–874 (EPDRSSHSKNEEADRRDA) are compositionally biased toward basic and acidic residues. 2 stretches are compositionally biased toward polar residues: residues 890-913 (RGSS…SSED) and 1002-1028 (LQKA…SVSS).

It belongs to the adenomatous polyposis coli (APC) family. Interacts (via N-terminus) with bar-1 and hmp-2; the interaction with hmp-2 is relatively weak. Interacts (via C-terminus) with pry-1 (via N-terminus). Probably associates with bar-1, gsk-3, pry-1 in a complex.

Its subcellular location is the cell junction. The protein localises to the adherens junction. It is found in the cytoplasm. It localises to the nucleus. In terms of biological role, has a role in endoderm cell specification and pharyngeal development. Required for the migration of epithelial cells, organization of the anterior seam cells and ceh-13 expression during embryo morphogenesis. Prevents hyperactivation of the Wnt signaling pathway during endoderm development, probably by preventing hmp-2 nuclear translocation. During larval development, apr-1 is required for expression of lin-39 in P3-8.p. Shown to negatively regulate Wnt signaling in vulval precursor cells. Has a role in cell division by establishing the polarity of the mother cell which forms the asymmetries of the daughter nuclei. Thought to regulate export of wrm-1 from the nucleus possibly as part of a complex involving pry-1. This is APC-related protein 1 from Caenorhabditis briggsae.